Consider the following 105-residue polypeptide: UPF0145 protein Aflv_1588 (105 aa).

It belongs to the UPF0145 family.

In Anoxybacillus flavithermus (strain DSM 21510 / WK1), this protein is UPF0145 protein Aflv_1588.